The sequence spans 135 residues: CDGSH iron-sulfur domain-containing protein 2A (135 aa).

Residues 1–37 (MVLESIARVIKVQLPAYLKRLPIPDSIAGFIRLTVSE) lie on the Lumenal side of the membrane. A helical membrane pass occupies residues 38–60 (WLRLLPFLGVLALLGYLAIRPFL). Over 61–135 (LKKKQQKDSL…GPLILKKKEV (75 aa)) the chain is Cytoplasmic. Cysteine 99, cysteine 101, cysteine 110, and histidine 114 together coordinate [2Fe-2S] cluster.

The protein belongs to the CISD protein family. CISD2 subfamily. Homodimer. Requires [2Fe-2S] cluster as cofactor.

The protein resides in the endoplasmic reticulum membrane. It localises to the mitochondrion outer membrane. Regulator of autophagy that contributes to antagonize becn1-mediated cellular autophagy at the endoplasmic reticulum. Participates in the interaction of bcl2 with becn1 and is required for bcl2-mediated depression of endoplasmic reticulum Ca(2+) stores during autophagy. This is CDGSH iron-sulfur domain-containing protein 2A (cisd2-a) from Xenopus laevis (African clawed frog).